Here is a 430-residue protein sequence, read N- to C-terminus: Adenylosuccinate synthetase (430 aa).

GTP is bound by residues 13–19 (GDEGKGK) and 41–43 (GHT). D14 serves as the catalytic Proton acceptor. Mg(2+) contacts are provided by D14 and G41. Residues 14 to 17 (DEGK), 39 to 42 (NAGH), T130, R144, Q225, T240, and R304 contribute to the IMP site. Catalysis depends on H42, which acts as the Proton donor. 300–306 (ASTGRPR) contacts substrate. Residues R306, 332 to 334 (KLD), and 414 to 416 (STG) contribute to the GTP site.

This sequence belongs to the adenylosuccinate synthetase family. As to quaternary structure, homodimer. It depends on Mg(2+) as a cofactor.

The protein resides in the cytoplasm. The catalysed reaction is IMP + L-aspartate + GTP = N(6)-(1,2-dicarboxyethyl)-AMP + GDP + phosphate + 2 H(+). Its pathway is purine metabolism; AMP biosynthesis via de novo pathway; AMP from IMP: step 1/2. Functionally, plays an important role in the de novo pathway of purine nucleotide biosynthesis. Catalyzes the first committed step in the biosynthesis of AMP from IMP. This chain is Adenylosuccinate synthetase, found in Xylella fastidiosa (strain M12).